A 372-amino-acid polypeptide reads, in one-letter code: High-affinity lysophosphatidic acid receptor (372 aa).

The Extracellular segment spans residues 1–38 (MGCNNTALDNCMLPNLSIATAPLDLRFAFSTPLRMLLA). 2 N-linked (GlcNAc...) asparagine glycosylation sites follow: asparagine 4 and asparagine 15. A helical membrane pass occupies residues 39–59 (IIMILMIAIAFLGNAIVCLIV). Residues 60–80 (YQKPAMRSAINLLLATLAFSD) lie on the Cytoplasmic side of the membrane. A helical transmembrane segment spans residues 81–101 (IMLSLFCMPFTAVTIITGSWL). The Extracellular segment spans residues 102–108 (FGTQFCQ). A helical membrane pass occupies residues 109–129 (ISAMLYWFFVLEGVAILLIIS). Residues 130 to 149 (VDRFLIIVQRQDKLNPHRAK) lie on the Cytoplasmic side of the membrane. Residues 150 to 170 (IMIAASWVLSFCISLPSVVGW) form a helical membrane-spanning segment. Topologically, residues 171 to 198 (TLVEVPTRAPQCVLGYTEFSADRVYAVM) are extracellular. The helical transmembrane segment at 199–219 (LIVAVFFIPFSVMLYSYLCIL) threads the bilayer. Residues 220 to 268 (NTVRRNAVRIHTHADSLCLSQVSKLGLMGLQRPHQMNVDMSFKTRAFTT) are Cytoplasmic-facing. Residues 269–289 (ILILFIGFSLCWLPHSVFSLL) form a helical membrane-spanning segment. Residues 290–301 (SVFSRTFYYSSS) lie on the Extracellular side of the membrane. The helical transmembrane segment at 302-324 (FYSISTCTLWLTYLKSVFNPVIY) threads the bilayer. Residues 325–372 (CWRIKKFREACLEFMPKTFKILPNVRGRTRRRIRPSTIYVCGEHQSAV) are Cytoplasmic-facing.

This sequence belongs to the G-protein coupled receptor 1 family. In terms of tissue distribution, ubiquitously expressed.

It localises to the cell membrane. Its function is as follows. Highly selective receptor for lysophosphatidic acid (LPA), a mediator of diverse cellular activities. The chain is High-affinity lysophosphatidic acid receptor from Xenopus laevis (African clawed frog).